The following is a 135-amino-acid chain: Holo-[acyl-carrier-protein] synthase (135 aa).

Mg(2+) is bound by residues Asp-8 and Glu-57.

The protein belongs to the P-Pant transferase superfamily. AcpS family. Requires Mg(2+) as cofactor.

The protein localises to the cytoplasm. The enzyme catalyses apo-[ACP] + CoA = holo-[ACP] + adenosine 3',5'-bisphosphate + H(+). In terms of biological role, transfers the 4'-phosphopantetheine moiety from coenzyme A to a Ser of acyl-carrier-protein. This is Holo-[acyl-carrier-protein] synthase from Xanthobacter autotrophicus (strain ATCC BAA-1158 / Py2).